Here is a 226-residue protein sequence, read N- to C-terminus: Tyramine N-feruloyltransferase 10/30 (226 aa).

The important in binding site and for catalytic activity stretch occupies residues 29–45; the sequence is HIYKLFYQIHEYHNYTH. The N-acetyltransferase domain occupies 72–222; it reads VLLLEVSPTP…VGDALQKYAD (151 aa).

It belongs to the acetyltransferase family. In terms of assembly, homodimer.

It is found in the cytoplasm. The catalysed reaction is tyramine + (E)-feruloyl-CoA = N-[(E)-feruloyl]tyramine + CoA + H(+). With respect to regulation, inhibited by (2-hydroxyphenyl)amino sulfinyl acetic acid 1,1-dimethylethyl ester, by DEPC and by N-ethylmaleimide. Its function is as follows. Synthesizes amides which are involved in stress response in the cell wall. Catalyzes the synthesis of hydroxycinnamic acid amides from hydroxycinnamoyl-CoA thioesters and various hydroxyphenylethylamines such as 4-coumaroyl-CoA and sinapoyl-CoA. This chain is Tyramine N-feruloyltransferase 10/30 (THT10), found in Nicotiana tabacum (Common tobacco).